The primary structure comprises 512 residues: Transactivator/viroplasmin protein (512 aa).

Disordered stretches follow at residues 76 to 123 (GNER…NPVA) and 474 to 512 (ADSS…IPSI). A compositionally biased stretch (polar residues) spans 476 to 487 (SSSTSGEQNNVE). A compositionally biased stretch (basic and acidic residues) spans 499-512 (YDERSDDHKRIPSI).

It belongs to the caulimoviridae viroplasmin family.

The protein localises to the host cytoplasm. Its function is as follows. Enhances the translation of downstream ORFs on polycistronic mRNAs derived from figwort mosaic virus. The sequence is that of Transactivator/viroplasmin protein from Figwort mosaic virus (strain DxS) (FMV).